Consider the following 142-residue polypeptide: MLSPKRVKFRKMFKGRMTGLAHRGSDVSFGTYGLQALEPGWVTSRQIEACRVAMTRHIKRGGKVWIRIFPDKPITKKPAETRMGKGKGSPELWVAVVKPGRVMFEIEGVSKELAETAMSLAAAKLGVKTKFVAREEAVTHEG.

This sequence belongs to the universal ribosomal protein uL16 family. Part of the 50S ribosomal subunit.

Functionally, binds 23S rRNA and is also seen to make contacts with the A and possibly P site tRNAs. In Gemmatimonas aurantiaca (strain DSM 14586 / JCM 11422 / NBRC 100505 / T-27), this protein is Large ribosomal subunit protein uL16.